The chain runs to 201 residues: Recombination protein RecR (201 aa).

The C4-type zinc-finger motif lies at 57–72 (CADCRTFTEQEKCNIC). The Toprim domain maps to 81-176 (GQICVVESPA…DASRIAHGVP (96 aa)).

The protein belongs to the RecR family.

In terms of biological role, may play a role in DNA repair. It seems to be involved in an RecBC-independent recombinational process of DNA repair. It may act with RecF and RecO. The polypeptide is Recombination protein RecR (Cronobacter sakazakii (strain ATCC BAA-894) (Enterobacter sakazakii)).